Reading from the N-terminus, the 192-residue chain is Transcriptional activator GvpE (192 aa).

140–145 lines the DNA pocket; that stretch reads KRKVYR. The tract at residues 150 to 181 is leucine-zipper; the sequence is EATFDTVEPAVNRLVTFSLVLKALMIDCNARY.

Interacts with GvpD, also with c-GvpD from H.salinarum.

It is found in the cytoplasm. With respect to regulation, the amount of protein that accumulates is controlled by GvpD; GvpD causes a reduction in the amount of GvpE, preventing accumulation of excessive amounts of gas vesicles. Functionally, plays a regulatory role in gas vesicle synthesis, activates transcription of the gvpA operon, and probably of the gvpD operon. Gas vesicles are hollow, gas filled proteinaceous nanostructures found in some microorganisms. They allow positioning of halobacteria at the optimal depth for growth in the poorly aerated, shallow brine pools of their habitat. Its function is as follows. Expression of a 9.5 kb mc-vac DNA fragment containing 2 divergently transcribed regions (gvpD-gvpE-gvpF-gvpG-gvpH-gvpI-gvpJ-gvpK-gvpL-gvpM and gvpA-gvpC-gvpN-gvpO) allows H.volcanii to produce gas vesicles. The chain is Transcriptional activator GvpE from Haloferax mediterranei (strain ATCC 33500 / DSM 1411 / JCM 8866 / NBRC 14739 / NCIMB 2177 / R-4) (Halobacterium mediterranei).